The chain runs to 153 residues: ORM1-like protein 3 (153 aa).

The important for ceramide level-sensing stretch occupies residues 1-17 (MNVGTAHSEVNPNTRVM). Residues 1–21 (MNVGTAHSEVNPNTRVMNSRG) lie on the Cytoplasmic side of the membrane. The next 2 membrane-spanning stretches (helical) occupy residues 22 to 42 (IWLSYVLAIGLLHVVLLSIPF) and 43 to 63 (VSVPVVWTLTNLIHNLGMYIF). At 64–94 (LHTVKGTPFETPDQGKARLLTHWEQMDYGVQ) the chain is on the cytoplasmic side. A helical transmembrane segment spans residues 95 to 117 (FTASRKFLTITPIVLYFLTSFYT). Topologically, residues 118 to 121 (KYDQ) are extracellular. The helical transmembrane segment at 122–142 (VHFILNTVSLMTVLIPKLPQL) threads the bilayer. Residue Pro-137 is modified to Hydroxyproline. Residues 143-153 (HGVRIFGINKY) lie on the Cytoplasmic side of the membrane.

The protein belongs to the ORM family. As to quaternary structure, ceramide-sensitive subunit of the serine palmitoyltransferase (SPT) complex, which is also composed of SPTLC1, SPTLC2/3 and SPTSSA/B. In terms of processing, when hydroxylated at Pro-137, ubiquitinated via 'Lys-48'-linkage, leading to proteasomal degradation. In endothelial cells, ORMDL3 proteasomal degradation is controlled by the sphingosine 1-phosphate receptor signaling pathway.

The protein localises to the endoplasmic reticulum membrane. Functionally, plays an essential role in the homeostatic regulation of sphingolipid de novo biosynthesis by modulating the activity of the serine palmitoyltransferase (SPT) in response to ceramide levels. When complexed to SPT, the binding of ceramides to its N-terminus stabilizes a conformation that block SPT substrate entry, hence preventing SPT catalytic activity. Through this mechanism, maintains ceramide levels at sufficient concentrations for the production of complex sphingolipids, but which prevents the accumulation of ceramides to levels that trigger apoptosis. The sequence is that of ORM1-like protein 3 (Ormdl3) from Mus musculus (Mouse).